Consider the following 777-residue polypeptide: Probable aconitate hydratase, mitochondrial (777 aa).

A mitochondrion-targeting transit peptide spans 1–26 (MNSLLRLSHLAGPAHYRALHSSSSIW). Residues Gln-96 and 189–191 (DSH) each bind substrate. Residues Cys-382, Cys-445, and Cys-448 each contribute to the [4Fe-4S] cluster site. Substrate is bound by residues Arg-471 and Arg-476. Positions 534 to 555 (YDPGEDTFQAPSGSGQVDVSPS) are disordered. Residues 542 to 555 (QAPSGSGQVDVSPS) are compositionally biased toward polar residues. Substrate is bound by residues Arg-601 and 664–665 (SR).

It belongs to the aconitase/IPM isomerase family. As to quaternary structure, monomer. [4Fe-4S] cluster is required as a cofactor.

It localises to the mitochondrion. It carries out the reaction citrate = D-threo-isocitrate. It functions in the pathway carbohydrate metabolism; tricarboxylic acid cycle; isocitrate from oxaloacetate: step 2/2. Catalyzes the isomerization of citrate to isocitrate via cis-aconitate. This chain is Probable aconitate hydratase, mitochondrial, found in Caenorhabditis elegans.